Here is a 266-residue protein sequence, read N- to C-terminus: Undecaprenyl-diphosphatase (266 aa).

Transmembrane regions (helical) follow at residues serine 38–tryptophan 58, leucine 80–phenylalanine 100, proline 108–alanine 128, isoleucine 136–glycine 156, alanine 176–tyrosine 196, isoleucine 217–isoleucine 237, and phenylalanine 245–isoleucine 265.

It belongs to the UppP family.

It localises to the cell inner membrane. It carries out the reaction di-trans,octa-cis-undecaprenyl diphosphate + H2O = di-trans,octa-cis-undecaprenyl phosphate + phosphate + H(+). In terms of biological role, catalyzes the dephosphorylation of undecaprenyl diphosphate (UPP). Confers resistance to bacitracin. The protein is Undecaprenyl-diphosphatase of Rhizobium leguminosarum bv. trifolii (strain WSM2304).